Reading from the N-terminus, the 165-residue chain is UPF0114 protein in repA1-repA2 intergenic region (165 aa).

3 helical membrane passes run 10–32 (YASRWLMFPVYIGLSLGFILLTL), 53–75 (LVLVVLSLIDISLVGGLLVMVMF), and 134–156 (DQIMWCVLIHLTFVISAFGMACI).

Belongs to the UPF0114 family.

The protein localises to the cell membrane. The polypeptide is UPF0114 protein in repA1-repA2 intergenic region (Buchnera aphidicola subsp. Baizongia pistaciae (strain Bp)).